The following is a 175-amino-acid chain: Large ribosomal subunit protein bL17m (175 aa).

The N-terminal 8 residues, 1 to 8, are a transit peptide targeting the mitochondrion; that stretch reads MRLSVCAA. The disordered stretch occupies residues 155 to 175; that stretch reads DLSQSQEASNHSSHTAQTPGI. The span at 157 to 175 shows a compositional bias: polar residues; it reads SQSQEASNHSSHTAQTPGI.

This sequence belongs to the bacterial ribosomal protein bL17 family. Component of the mitochondrial ribosome large subunit (39S) which comprises a 16S rRNA and about 50 distinct proteins.

The protein resides in the mitochondrion. The sequence is that of Large ribosomal subunit protein bL17m (MRPL17) from Pongo abelii (Sumatran orangutan).